The sequence spans 375 residues: UDP-4-amino-4,6-dideoxy-N-acetyl-beta-L-altrosamine transaminase (375 aa).

Substrate is bound by residues tyrosine 6, 26 to 29 (KQLT), alanine 56, and serine 178. Lysine 183 bears the N6-(pyridoxal phosphate)lysine mark. Substrate is bound by residues asparagine 228 and 313-316 (QVHY).

This sequence belongs to the DegT/DnrJ/EryC1 family.

It carries out the reaction UDP-4-amino-4,6-dideoxy-N-acetyl-beta-L-altrosamine + 2-oxoglutarate = UDP-2-acetamido-2,6-dideoxy-beta-L-arabino-hex-4-ulose + L-glutamate. In terms of biological role, catalyzes the second step in the biosynthesis of pseudaminic acid, a sialic-acid-like sugar that is used to modify flagellin. Uses UDP-2-acetamido-2,6-dideoxy-beta-L-arabino-4-hexulose as substrate producing UDP-4-amino-4,6-dideoxy-beta-L-AltNAc. In Helicobacter pylori (strain ATCC 700392 / 26695) (Campylobacter pylori), this protein is UDP-4-amino-4,6-dideoxy-N-acetyl-beta-L-altrosamine transaminase (pseC).